A 417-amino-acid polypeptide reads, in one-letter code: DNA primase DnaG (417 aa).

The Toprim domain maps to 171 to 257 (DAIIIVEGRA…SVEDMARKEI (87 aa)). 3 residues coordinate Mg(2+): E177, D219, and D221. Positions 278-325 (VPGEKRTQDLRPQKPGASEQNSIKKENVENENESTPTSFEPISEPAPP) are disordered. A compositionally biased stretch (basic and acidic residues) spans 279 to 289 (PGEKRTQDLRP).

The protein belongs to the archaeal DnaG primase family. Forms a ternary complex with MCM helicase and DNA. It depends on Mg(2+) as a cofactor.

It carries out the reaction ssDNA + n NTP = ssDNA/pppN(pN)n-1 hybrid + (n-1) diphosphate.. RNA polymerase that catalyzes the synthesis of short RNA molecules used as primers for DNA polymerase during DNA replication. The chain is DNA primase DnaG from Methanosphaerula palustris (strain ATCC BAA-1556 / DSM 19958 / E1-9c).